The sequence spans 309 residues: S-methyl-5'-thioadenosine phosphorylase (309 aa).

Phosphate contacts are provided by residues Thr19, 64-65 (RH), and 97-98 (SA). Met201 lines the substrate pocket. Position 202 (Ser202) interacts with phosphate. 225 to 227 (DYD) contributes to the substrate binding site.

Belongs to the PNP/MTAP phosphorylase family. MTAP subfamily. In terms of assembly, homotrimer.

It is found in the cytoplasm. Its subcellular location is the nucleus. It carries out the reaction S-methyl-5'-thioadenosine + phosphate = 5-(methylsulfanyl)-alpha-D-ribose 1-phosphate + adenine. It participates in amino-acid biosynthesis; L-methionine biosynthesis via salvage pathway; S-methyl-5-thio-alpha-D-ribose 1-phosphate from S-methyl-5'-thioadenosine (phosphorylase route): step 1/1. Functionally, catalyzes the reversible phosphorylation of S-methyl-5'-thioadenosine (MTA) to adenine and 5-methylthioribose-1-phosphate. Involved in the breakdown of MTA, a major by-product of polyamine biosynthesis. Responsible for the first step in the methionine salvage pathway after MTA has been generated from S-adenosylmethionine. Has broad substrate specificity with 6-aminopurine nucleosides as preferred substrates. The protein is S-methyl-5'-thioadenosine phosphorylase of Tuber melanosporum (strain Mel28) (Perigord black truffle).